Consider the following 250-residue polypeptide: Membrane-spanning 4-domains subfamily A member 8 (250 aa).

At Met1 to Ala74 the chain is on the cytoplasmic side. A helical transmembrane segment spans residues Ile75 to Val95. Over Gly96–Tyr98 the chain is Extracellular. A helical transmembrane segment spans residues Leu99–Gly119. Residues Ser120–Ser136 lie on the Cytoplasmic side of the membrane. The chain crosses the membrane as a helical span at residues Gly137–Ile157. At Thr158–Pro180 the chain is on the extracellular side. Residues Gly181–Ala201 form a helical membrane-spanning segment. At Ser202–Lys250 the chain is on the cytoplasmic side.

This sequence belongs to the MS4A family. As to expression, expressed by hematopoietic tissues and cells lines.

It localises to the membrane. In terms of biological role, may be involved in signal transduction as a component of a multimeric receptor complex. The sequence is that of Membrane-spanning 4-domains subfamily A member 8 (MS4A8) from Homo sapiens (Human).